A 218-amino-acid chain; its full sequence is Cytochrome b6 (218 aa).

Residues isoleucine 35 to phenylalanine 55 traverse the membrane as a helical segment. Residue cysteine 38 participates in heme c binding. Positions 89 and 103 each coordinate heme b. 3 helical membrane passes run alanine 93–phenylalanine 113, leucine 119–tyrosine 139, and leucine 189–isoleucine 209. Residues histidine 190 and histidine 205 each contribute to the heme b site.

Belongs to the cytochrome b family. PetB subfamily. In terms of assembly, the 4 large subunits of the cytochrome b6-f complex are cytochrome b6, subunit IV (17 kDa polypeptide, PetD), cytochrome f and the Rieske protein, while the 4 small subunits are PetG, PetL, PetM and PetN. The complex functions as a dimer. Heme b is required as a cofactor. It depends on heme c as a cofactor.

It localises to the cellular thylakoid membrane. Component of the cytochrome b6-f complex, which mediates electron transfer between photosystem II (PSII) and photosystem I (PSI), cyclic electron flow around PSI, and state transitions. The sequence is that of Cytochrome b6 from Parasynechococcus marenigrum (strain WH8102).